Reading from the N-terminus, the 1093-residue chain is MPGVIMDNATVGRLGHAPDTQTPSNGDNLRNGSLHINGAAKGDKDHDPDKESYTGKPKIDGHRALPELPHITQGFFPFSTLVNRYVQQCWNELSDLITELAAIQVSPHSSMPLLPANGKSPGNQSPENVQKKLRILDFAHAKRAEFIKLLVLSQWSRRAHDVSKLIDLQNFIRSRHQAFVDALQRVGEMKRDLVQAQVANPDLQTALEILSKGRLESLADLGYKSSKLLTARGALKRLHRINRIISARLALHDSIPHPFRTYRVHDGRVTFVVRGEFELDLSVGAESELSQFFFVDIRFLYSPSSNIPNGRMSNEIDAKINDKLRDSGLTGCFNFLHGLVLTNKIHILFKQAIELAKGLWSETLRVELLHRTLVIQYWALKPGPKSWVEIGVKSGNGDADSQGVGVPCLGLRWMRDGQEVDSRDIEFDPEDLSMECLLRSVIALHISYLLSSAYGILSEYSLFSTGTLSSQAILNVTEPGECQLSVQLTGSRHLRVSIEPMSGAVTLSATPGLSERSESDASLDRSTIDDLVARVSRLRCIAAIEELESNVRILGFETVSPKGLRNEIRTVFPANVLRFSLFWHPSWERNWVVAATSSITGDNWWVVQLRRSSEVATDFSVSDTSVPLCSGHSMSDTFLATSHQTRSSSFPDLGYCLSGMVAIYANVSYLSDLQSVEFHPPLCALKVESDLQIPDIFIRYQVSKLPRALQLVLPAGLKRKNLLKDTVRLAFHGIDRHKNSAIFVAYGNLVGPWTDLCTLVSKSDSSLVFKRGGSGFALRLLAPAGRPVIVQLFKSLQTLECTLSILDFLRQRRLTPQSLSLTHIAFAYGPRRDLSAIIGIGLSEVPSSAELDPVRILARTDPLLFLTLGIRFKHPNPHRRVQGSLAAILNHASNEAGLDFVTEILSFTLPLMRALEQITSNASRQESFRLQVIVRNACTFLLHYTYQGFRFQLTTSQHSGQLTWVLRELSSPGAGPGHDQLKARLRGTLYHSNGNGWKGLGNGVVADVEGVSNVIWALDGCFTGAQHNTWLPRETKSDQDYSTQPVPEKQSQTGAPSQAAMANDTTITANFVNDKSLQRNPVASNAADVITID.

2 disordered regions span residues 1–61 and 1035–1060; these read MPGV…KIDG and TKSD…SQAA. Positions 19-31 are enriched in polar residues; that stretch reads DTQTPSNGDNLRN. Over residues 41–61 the composition is skewed to basic and acidic residues; it reads KGDKDHDPDKESYTGKPKIDG. Positions 1040-1056 are enriched in polar residues; that stretch reads DYSTQPVPEKQSQTGAP.

It belongs to the Mediator complex subunit 14 family. Component of the Mediator complex.

Its subcellular location is the nucleus. Functionally, component of the Mediator complex, a coactivator involved in the regulated transcription of nearly all RNA polymerase II-dependent genes. Mediator functions as a bridge to convey information from gene-specific regulatory proteins to the basal RNA polymerase II transcription machinery. Mediator is recruited to promoters by direct interactions with regulatory proteins and serves as a scaffold for the assembly of a functional preinitiation complex with RNA polymerase II and the general transcription factors. In Neosartorya fischeri (strain ATCC 1020 / DSM 3700 / CBS 544.65 / FGSC A1164 / JCM 1740 / NRRL 181 / WB 181) (Aspergillus fischerianus), this protein is Mediator of RNA polymerase II transcription subunit 14 (rgr1).